Here is a 171-residue protein sequence, read N- to C-terminus: Translationally-controlled tumor protein homolog (171 aa).

In terms of domain architecture, TCTP spans 1–171; sequence MIIYKDIITG…FKDGLEIEKC (171 aa).

This sequence belongs to the TCTP family.

It is found in the cytoplasm. Functionally, involved in calcium binding and microtubule stabilization. In Labeo rohita (Indian major carp), this protein is Translationally-controlled tumor protein homolog (tpt1).